A 719-amino-acid polypeptide reads, in one-letter code: Phenylalanine--tRNA ligase beta subunit, chloroplastic (719 aa).

In terms of domain architecture, B5 spans 318 to 403 (DHALNINLSI…RIYGYHKFRS (86 aa)). Aspartate 381, aspartate 387, glutamate 390, and glutamate 391 together coordinate Mg(2+). Positions 625–718 (SKYPSIIRDL…IVKQLNLKIR (94 aa)) constitute an FDX-ACB domain.

This sequence belongs to the phenylalanyl-tRNA synthetase beta subunit family. Type 1 subfamily. Tetramer of two alpha and two beta subunits. It depends on Mg(2+) as a cofactor.

It localises to the plastid. The protein resides in the chloroplast. It carries out the reaction tRNA(Phe) + L-phenylalanine + ATP = L-phenylalanyl-tRNA(Phe) + AMP + diphosphate + H(+). This chain is Phenylalanine--tRNA ligase beta subunit, chloroplastic, found in Pyropia yezoensis (Susabi-nori).